Consider the following 1512-residue polypeptide: Mitogen-activated protein kinase kinase kinase 1 (1512 aa).

Positions 1 to 13 (MAAAAGNRASSSG) are enriched in low complexity. Disordered stretches follow at residues 1–37 (MAAA…SSAP), 67–181 (SVEL…DRPE), and 213–304 (VKPI…PEET). Alanine 2 carries the N-acetylalanine modification. 2 positions are modified to phosphoserine: serine 21 and serine 35. Low complexity-rich tracts occupy residues 81-99 (AASP…ADAA), 129-142 (AAPD…AAAE), and 150-160 (AAEPSPAAAPA). 2 positions are modified to phosphoserine: serine 137 and serine 154. A compositionally biased stretch (basic and acidic residues) spans 162-181 (REMENKETLKGLHKMDDRPE). Over residues 250–260 (SPSPGNSPSGR) the composition is skewed to low complexity. Serine 275 is modified (phosphoserine). Phosphothreonine is present on threonine 285. A phosphoserine mark is found at serine 292, serine 297, and serine 300. The segment at 338–366 (YRVFIGPQNCSCARGTFCIHLLFVMLRVF) adopts an SWIM-type zinc-finger fold. The segment covering 416-433 (SNSHTLSSSSTSTSSSEN) has biased composition (low complexity). The tract at residues 416–436 (SNSHTLSSSSTSTSSSENSIK) is disordered. The RING-type zinc-finger motif lies at 443–492 (CPICLLGMLDEESLTVCEDGCRNKLHHHCMSIWAEECRRNREPLICPLCR). Serine 507 and serine 531 each carry phosphoserine. 2 disordered regions span residues 511–532 (SPSS…AGSR) and 602–624 (STGN…GSSQ). The span at 611–624 (GSSPSGGATSGSSQ) shows a compositional bias: low complexity. Serine 923 carries the phosphoserine modification. The segment at 933–972 (SISVGPSSSTTTTTTTTEQPKPMVQTKGRPHSQCLNSSPL) is disordered. The span at 939–949 (SSSTTTTTTTT) shows a compositional bias: low complexity. Serine 1018 is subject to Phosphoserine. Over residues 1032–1041 (NCPENKDSDK) the composition is skewed to basic and acidic residues. A disordered region spans residues 1032 to 1087 (NCPENKDSDKLSPVFTQSRPLPSSNIHRPKPSRPTPGNTSKQGDPSKNSMTLDLNS). Serine 1043 carries the phosphoserine modification. Composition is skewed to polar residues over residues 1045–1057 (VFTQ…SSNI) and 1066–1087 (TPGN…DLNS). The Protein kinase domain maps to 1243–1508 (WLKGQQIGLG…SRELLKHPVF (266 aa)). ATP-binding positions include 1249 to 1257 (IGLGAFSSC) and lysine 1272. Residue aspartate 1369 is the Proton acceptor of the active site. Phosphothreonine; by autocatalysis occurs at positions 1400 and 1412.

It belongs to the protein kinase superfamily. STE Ser/Thr protein kinase family. MAP kinase kinase kinase subfamily. As to quaternary structure, binds both upstream activators and downstream substrates in multimolecular complexes through its N-terminus. Oligomerizes after binding MAP2K4 or TRAF2. Interacts with AXIN1. Interacts (via the kinase catalytic domain) with STK38. Interacts with GRIPAP1. Mg(2+) is required as a cofactor. Post-translationally, autophosphorylated.

The catalysed reaction is L-seryl-[protein] + ATP = O-phospho-L-seryl-[protein] + ADP + H(+). The enzyme catalyses L-threonyl-[protein] + ATP = O-phospho-L-threonyl-[protein] + ADP + H(+). It carries out the reaction S-ubiquitinyl-[E2 ubiquitin-conjugating enzyme]-L-cysteine + [acceptor protein]-L-lysine = [E2 ubiquitin-conjugating enzyme]-L-cysteine + N(6)-ubiquitinyl-[acceptor protein]-L-lysine.. Its activity is regulated as follows. Activated by autophosphorylation on Thr-1400 and Thr-1412 following oligomerization. Component of a protein kinase signal transduction cascade. Activates the ERK and JNK kinase pathways by phosphorylation of MAP2K1 and MAP2K4. May phosphorylate the MAPK8/JNK1 kinase. Activates CHUK and IKBKB, the central protein kinases of the NF-kappa-B pathway. In Homo sapiens (Human), this protein is Mitogen-activated protein kinase kinase kinase 1 (MAP3K1).